The chain runs to 1328 residues: Myb-binding protein 1A (1328 aa).

The tract at residues 1-22 is disordered; the sequence is MESRDPAQPMSPGEATQSGARP. An interaction with MYB region spans residues 1 to 582; it reads MESRDPAQPM…WDRMLQTLKE (582 aa). At S11 the chain carries Phosphoserine. An N6-acetyllysine mark is found at K71 and K158. 2 consecutive short sequence motifs (nuclear export signal) follow at residues 240–258 and 263–281; these read SDENVPRLVNVLKMAASSV and KLPAIALDLLRLALKEDKF. The segment at 698–753 is disordered; that stretch reads SEDENDRVVVTDDSDERRLKGAEDKSEEGEDNRSSESEEESEGEESEEEERDGDVD. Residues 703–721 are compositionally biased toward basic and acidic residues; that stretch reads DRVVVTDDSDERRLKGAED. Over residues 734–752 the composition is skewed to acidic residues; sequence SEEESEGEESEEEERDGDV. S775 is modified (phosphoserine). The interval 1146–1292 is disordered; the sequence is RPKLEKKDAK…KKGVLGKSPL (147 aa). The span at 1147–1156 shows a compositional bias: basic and acidic residues; it reads PKLEKKDAKE. A Glycyl lysine isopeptide (Lys-Gly) (interchain with G-Cter in SUMO2) cross-link involves residue K1148. Residues 1151 to 1328 form a required for nuclear and nucleolar localization region; it reads KKDAKEIPSA…KAQVRKAGKP (178 aa). S1159 and S1163 each carry phosphoserine. The segment covering 1166-1184 has biased composition (basic residues); sequence SKKRKKKGFLPETKKRKKR. At S1186 the chain carries Phosphoserine. Phosphothreonine is present on residues T1190 and T1196. The residue at position 1207 (S1207) is a Phosphoserine. Over residues 1209–1218 the composition is skewed to basic residues; the sequence is GRKKRNRTKA. A Phosphoserine modification is found at S1232. T1239 carries the post-translational modification Phosphothreonine. S1241 carries the phosphoserine modification. T1244 is modified (phosphothreonine). Phosphoserine occurs at positions 1248 and 1267. A Phosphothreonine modification is found at T1269. A phosphoserine mark is found at S1290 and S1303. The tract at residues 1306–1328 is disordered; that stretch reads IRSPSLLQSGAKKKAQVRKAGKP. Residue R1307 is modified to Citrulline. S1308, S1310, and S1314 each carry phosphoserine. Basic residues predominate over residues 1316–1328; that stretch reads AKKKAQVRKAGKP.

It belongs to the MYBBP1A family. In terms of assembly, binds to and represses JUN and MYB via the leucine zipper regions present in these proteins. Also binds to and represses PPARGC1A: this interaction is abrogated when PPARGC1A is phosphorylated by MAPK1/ERK. Binds to and stimulates transcription by AHR. Binds to KPNA2. Interacts with CLOCK and CRY1. Component of the B-WICH complex, at least composed of SMARCA5/SNF2H, BAZ1B/WSTF, SF3B1, DEK, MYO1C, ERCC6, MYBBP1A and DDX21. Citrullinated by PADI4.

It localises to the cytoplasm. Its subcellular location is the nucleus. The protein resides in the nucleolus. Functionally, may activate or repress transcription via interactions with sequence specific DNA-binding proteins. Repression may be mediated at least in part by histone deacetylase activity (HDAC activity). Acts as a corepressor and in concert with CRY1, represses the transcription of the core circadian clock component PER2. Preferentially binds to dimethylated histone H3 'Lys-9' (H3K9me2) on the PER2 promoter. Has a role in rRNA biogenesis together with PWP1. The protein is Myb-binding protein 1A (MYBBP1A) of Homo sapiens (Human).